Here is a 219-residue protein sequence, read N- to C-terminus: UPF0502 protein Gmet_0262 (219 aa).

Belongs to the UPF0502 family.

The polypeptide is UPF0502 protein Gmet_0262 (Geobacter metallireducens (strain ATCC 53774 / DSM 7210 / GS-15)).